Reading from the N-terminus, the 130-residue chain is Small ribosomal subunit protein uS11 (130 aa).

Belongs to the universal ribosomal protein uS11 family. As to quaternary structure, part of the 30S ribosomal subunit. Interacts with proteins S7 and S18. Binds to IF-3.

Its function is as follows. Located on the platform of the 30S subunit, it bridges several disparate RNA helices of the 16S rRNA. Forms part of the Shine-Dalgarno cleft in the 70S ribosome. The polypeptide is Small ribosomal subunit protein uS11 (Xanthomonas oryzae pv. oryzae (strain MAFF 311018)).